Reading from the N-terminus, the 388-residue chain is Cytochrome b (388 aa).

Transmembrane regions (helical) follow at residues 38–58 (FGCL…FLAM), 82–104 (WLLR…LHIF), 119–139 (VWCL…IGYV), and 185–205 (FFSL…LHLA). Heme b-binding residues include histidine 88 and histidine 102. The heme b site is built by histidine 189 and histidine 203. Histidine 208 is a binding site for a ubiquinone. The next 4 membrane-spanning stretches (helical) occupy residues 231–251 (FYVK…IWIF), 295–315 (AGGV…PFFK), 327–347 (IHQG…WIGC), and 354–373 (FVTI…AITP).

This sequence belongs to the cytochrome b family. In terms of assembly, the main subunits of complex b-c1 are: cytochrome b, cytochrome c1 and the Rieske protein. Requires heme b as cofactor.

It localises to the mitochondrion inner membrane. In terms of biological role, component of the ubiquinol-cytochrome c reductase complex (complex III or cytochrome b-c1 complex) that is part of the mitochondrial respiratory chain. The b-c1 complex mediates electron transfer from ubiquinol to cytochrome c. Contributes to the generation of a proton gradient across the mitochondrial membrane that is then used for ATP synthesis. This Zea mays (Maize) protein is Cytochrome b (MT-CYB).